We begin with the raw amino-acid sequence, 348 residues long: Fe(3+) ions import ATP-binding protein FbpC (348 aa).

The ABC transporter domain maps to 7-237; it reads VELRNVTKRF…PASRFMASFM (231 aa). 39–46 contacts ATP; it reads GPSGCGKT.

This sequence belongs to the ABC transporter superfamily. Fe(3+) ion importer (TC 3.A.1.10) family. As to quaternary structure, the complex is composed of two ATP-binding proteins (FbpC), two transmembrane proteins (FbpB) and a solute-binding protein (FbpA).

Its subcellular location is the cell inner membrane. It carries out the reaction Fe(3+)(out) + ATP + H2O = Fe(3+)(in) + ADP + phosphate + H(+). Functionally, part of the ABC transporter complex FbpABC involved in Fe(3+) ions import. Responsible for energy coupling to the transport system. This Escherichia coli O157:H7 protein is Fe(3+) ions import ATP-binding protein FbpC.